The following is a 119-amino-acid chain: Dihydroneopterin aldolase (119 aa).

Residues Glu21, Tyr53, and 72-73 (ID) each bind substrate. Lys99 serves as the catalytic Proton donor/acceptor.

It belongs to the DHNA family.

The catalysed reaction is 7,8-dihydroneopterin = 6-hydroxymethyl-7,8-dihydropterin + glycolaldehyde. It functions in the pathway cofactor biosynthesis; tetrahydrofolate biosynthesis; 2-amino-4-hydroxy-6-hydroxymethyl-7,8-dihydropteridine diphosphate from 7,8-dihydroneopterin triphosphate: step 3/4. Catalyzes the conversion of 7,8-dihydroneopterin to 6-hydroxymethyl-7,8-dihydropterin. The protein is Dihydroneopterin aldolase (folB) of Streptococcus pyogenes.